A 199-amino-acid chain; its full sequence is Probable molybdenum cofactor guanylyltransferase (199 aa).

GTP-binding positions include 9 to 11, Lys21, Asp69, and Asp100; that span reads LAG. A Mg(2+)-binding site is contributed by Asp100.

The protein belongs to the MobA family. Mg(2+) is required as a cofactor.

The protein localises to the cytoplasm. It catalyses the reaction Mo-molybdopterin + GTP + H(+) = Mo-molybdopterin guanine dinucleotide + diphosphate. Its function is as follows. Transfers a GMP moiety from GTP to Mo-molybdopterin (Mo-MPT) cofactor (Moco or molybdenum cofactor) to form Mo-molybdopterin guanine dinucleotide (Mo-MGD) cofactor. This chain is Probable molybdenum cofactor guanylyltransferase, found in Bacillus cytotoxicus (strain DSM 22905 / CIP 110041 / 391-98 / NVH 391-98).